A 438-amino-acid polypeptide reads, in one-letter code: V-type ATP synthase beta chain (438 aa).

This sequence belongs to the ATPase alpha/beta chains family.

In terms of biological role, produces ATP from ADP in the presence of a proton gradient across the membrane. The V-type beta chain is a regulatory subunit. In Protochlamydia amoebophila (strain UWE25), this protein is V-type ATP synthase beta chain.